The following is a 93-amino-acid chain: Integration host factor subunit beta (93 aa).

Residues Arg59–Asp93 form a disordered region. The segment covering Pro82–Asp93 has biased composition (basic and acidic residues).

The protein belongs to the bacterial histone-like protein family. As to quaternary structure, heterodimer of an alpha and a beta chain.

Its function is as follows. This protein is one of the two subunits of integration host factor, a specific DNA-binding protein that functions in genetic recombination as well as in transcriptional and translational control. This chain is Integration host factor subunit beta, found in Stutzerimonas stutzeri (strain A1501) (Pseudomonas stutzeri).